Reading from the N-terminus, the 105-residue chain is ATP-dependent Clp protease adapter protein ClpS (105 aa).

The disordered stretch occupies residues 1-27 (MVVMSAPTEPKSRPGTTGQRESAPEDV).

This sequence belongs to the ClpS family. Binds to the N-terminal domain of the chaperone ClpA.

Its function is as follows. Involved in the modulation of the specificity of the ClpAP-mediated ATP-dependent protein degradation. The sequence is that of ATP-dependent Clp protease adapter protein ClpS from Mycolicibacterium paratuberculosis (strain ATCC BAA-968 / K-10) (Mycobacterium paratuberculosis).